Here is a 320-residue protein sequence, read N- to C-terminus: Acetyl-coenzyme A carboxylase carboxyl transferase subunit alpha (320 aa).

The CoA carboxyltransferase C-terminal domain maps to 42 to 295 (IGDKAAQALK…GDAIAEAFND (254 aa)).

This sequence belongs to the AccA family. In terms of assembly, acetyl-CoA carboxylase is a heterohexamer composed of biotin carboxyl carrier protein (AccB), biotin carboxylase (AccC) and two subunits each of ACCase subunit alpha (AccA) and ACCase subunit beta (AccD).

The protein localises to the cytoplasm. It catalyses the reaction N(6)-carboxybiotinyl-L-lysyl-[protein] + acetyl-CoA = N(6)-biotinyl-L-lysyl-[protein] + malonyl-CoA. Its pathway is lipid metabolism; malonyl-CoA biosynthesis; malonyl-CoA from acetyl-CoA: step 1/1. Component of the acetyl coenzyme A carboxylase (ACC) complex. First, biotin carboxylase catalyzes the carboxylation of biotin on its carrier protein (BCCP) and then the CO(2) group is transferred by the carboxyltransferase to acetyl-CoA to form malonyl-CoA. The protein is Acetyl-coenzyme A carboxylase carboxyl transferase subunit alpha of Nitrobacter hamburgensis (strain DSM 10229 / NCIMB 13809 / X14).